We begin with the raw amino-acid sequence, 473 residues long: Gamma-aminobutyric acid receptor subunit beta-3 (473 aa).

An N-terminal signal peptide occupies residues 1–25 (MWGFAGGRLFGIFSAPVLVAVVCCA). The Extracellular portion of the chain corresponds to 26–246 (QSVNDPGNMS…FRLKRNIGYF (221 aa)). N-linked (GlcNAc...) asparagine glycans are attached at residues Asn33 and Asn105. Tyr122 contacts histamine. Cysteines 161 and 175 form a disulfide. The N-linked (GlcNAc...) asparagine glycan is linked to Asn174. The 4-aminobutanoate site is built by Glu180, Tyr182, and Thr227. Histamine is bound by residues 181–182 (SY) and Thr227. Residues 247 to 267 (ILQTYMPSILITILSWVSFWI) form a helical membrane-spanning segment. Topologically, residues 268–271 (NYDA) are cytoplasmic. The chain crosses the membrane as a helical span at residues 272–292 (SAARVALGITTVLTMTTINTH). Over 293–304 (LRETLPKIPYVK) the chain is Extracellular. The chain crosses the membrane as a helical span at residues 305–328 (AIDMYLMGCFVFVFLALLEYAFVN). Residues 329 to 447 (YIFFGRGPQR…KIPDLTDVNA (119 aa)) lie on the Cytoplasmic side of the membrane. A helical membrane pass occupies residues 448–470 (IDRWSRIVFPFTFSLFNLVYWLY). The Extracellular portion of the chain corresponds to 471 to 473 (YVN).

This sequence belongs to the ligand-gated ion channel (TC 1.A.9) family. Gamma-aminobutyric acid receptor (TC 1.A.9.5) subfamily. GABRB3 sub-subfamily. As to quaternary structure, heteropentamer, formed by a combination of alpha (GABRA1-6), beta (GABRB1-3), gamma (GABRG1-3), delta (GABRD), epsilon (GABRE), rho (GABRR1-3), pi (GABRP) and theta (GABRQ) chains, each subunit exhibiting distinct physiological and pharmacological properties. Can form functional homopentamers (in vitro). Interacts with UBQLN1. May interact with KIF21B. Identified in a complex of 720 kDa composed of LHFPL4, NLGN2, GABRA1, GABRB2, GABRG2 and GABRB3. Interacts with LHFPL4. Interacts with GIT1; this interaction is required for synaptic GABRB3 surface stability and inhibitory synapse strength.

It localises to the postsynaptic cell membrane. Its subcellular location is the cell membrane. The protein localises to the cytoplasmic vesicle membrane. The enzyme catalyses chloride(in) = chloride(out). Its activity is regulated as follows. Potentiated by histamine. Its function is as follows. Beta subunit of the heteropentameric ligand-gated chloride channel gated by gamma-aminobutyric acid (GABA), a major inhibitory neurotransmitter in the brain. GABA-gated chloride channels, also named GABA(A) receptors (GABAAR), consist of five subunits arranged around a central pore and contain GABA active binding site(s) located at the alpha and beta subunit interface(s). GABAARs containing beta-3/GABRB3 subunit are found at both synaptic and extrasynaptic sites. When activated by GABA, GABAARs selectively allow the flow of chloride anions across the cell membrane down their electrochemical gradient. Chloride influx into the postsynaptic neuron following GABAAR opening decreases the neuron ability to generate a new action potential, thereby reducing nerve transmission. GABAARs containing alpha-1 and beta-3 subunits exhibit synaptogenic activity; the gamma-2 subunit being necessary but not sufficient to induce rapid synaptic contacts formation. Extrasynaptic beta-3 receptors contribute to the tonic GABAergic inhibition. GABAARs containing alpha-1, beta-3 and epsilon subunits may permit spontaneous chloride channel activity while preserving the structural information required for GABA-gated openings. Beta-containing GABAARs can simultaneously bind GABA and histamine where histamine binds at the interface of two neighboring beta subunits, which may be involved in the regulation of sleep and wakefulness. Plays an important role in somatosensation and in the production of antinociception. This Mus musculus (Mouse) protein is Gamma-aminobutyric acid receptor subunit beta-3.